We begin with the raw amino-acid sequence, 208 residues long: Protein-L-isoaspartate O-methyltransferase (208 aa).

The active site involves S59.

Belongs to the methyltransferase superfamily. L-isoaspartyl/D-aspartyl protein methyltransferase family.

The protein resides in the cytoplasm. It carries out the reaction [protein]-L-isoaspartate + S-adenosyl-L-methionine = [protein]-L-isoaspartate alpha-methyl ester + S-adenosyl-L-homocysteine. Functionally, catalyzes the methyl esterification of L-isoaspartyl residues in peptides and proteins that result from spontaneous decomposition of normal L-aspartyl and L-asparaginyl residues. It plays a role in the repair and/or degradation of damaged proteins. In Salmonella arizonae (strain ATCC BAA-731 / CDC346-86 / RSK2980), this protein is Protein-L-isoaspartate O-methyltransferase.